The sequence spans 390 residues: Magnesium-protoporphyrin IX monomethyl ester [oxidative] cyclase (390 aa).

The segment at 1 to 20 (MSQSTIESTNKKEINKGKAP) is disordered.

This sequence belongs to the AcsF family. The cofactor is Fe cation.

The enzyme catalyses Mg-protoporphyrin IX 13-monomethyl ester + 3 NADPH + 3 O2 + 2 H(+) = 3,8-divinyl protochlorophyllide a + 3 NADP(+) + 5 H2O. The protein operates within porphyrin-containing compound metabolism; chlorophyll biosynthesis (light-independent). Its function is as follows. Catalyzes the formation of the isocyclic ring in chlorophyll biosynthesis. Mediates the cyclase reaction, which results in the formation of divinylprotochlorophyllide (Pchlide) characteristic of all chlorophylls from magnesium-protoporphyrin IX 13-monomethyl ester (MgPMME). This chain is Magnesium-protoporphyrin IX monomethyl ester [oxidative] cyclase, found in Prochlorococcus marinus (strain MIT 9301).